A 325-amino-acid chain; its full sequence is Lipoyl synthase (325 aa).

Positions 1–24 are disordered; that stretch reads MPIAPDRVRHPEKANRPDNPIQRK. The [4Fe-4S] cluster site is built by C54, C59, C65, C80, C84, C87, and S293. Residues 66-282 form the Radical SAM core domain; the sequence is WKKKHATFMI…VTVGRGKGFL (217 aa).

This sequence belongs to the radical SAM superfamily. Lipoyl synthase family. Requires [4Fe-4S] cluster as cofactor.

Its subcellular location is the cytoplasm. It catalyses the reaction [[Fe-S] cluster scaffold protein carrying a second [4Fe-4S](2+) cluster] + N(6)-octanoyl-L-lysyl-[protein] + 2 oxidized [2Fe-2S]-[ferredoxin] + 2 S-adenosyl-L-methionine + 4 H(+) = [[Fe-S] cluster scaffold protein] + N(6)-[(R)-dihydrolipoyl]-L-lysyl-[protein] + 4 Fe(3+) + 2 hydrogen sulfide + 2 5'-deoxyadenosine + 2 L-methionine + 2 reduced [2Fe-2S]-[ferredoxin]. Its pathway is protein modification; protein lipoylation via endogenous pathway; protein N(6)-(lipoyl)lysine from octanoyl-[acyl-carrier-protein]: step 2/2. In terms of biological role, catalyzes the radical-mediated insertion of two sulfur atoms into the C-6 and C-8 positions of the octanoyl moiety bound to the lipoyl domains of lipoate-dependent enzymes, thereby converting the octanoylated domains into lipoylated derivatives. The polypeptide is Lipoyl synthase (Rhodospirillum centenum (strain ATCC 51521 / SW)).